Here is an 883-residue protein sequence, read N- to C-terminus: Phosphoenolpyruvate carboxylase (883 aa).

Active-site residues include histidine 138 and lysine 546.

Belongs to the PEPCase type 1 family. The cofactor is Mg(2+).

It catalyses the reaction oxaloacetate + phosphate = phosphoenolpyruvate + hydrogencarbonate. Its function is as follows. Forms oxaloacetate, a four-carbon dicarboxylic acid source for the tricarboxylic acid cycle. This Salmonella schwarzengrund (strain CVM19633) protein is Phosphoenolpyruvate carboxylase.